The chain runs to 96 residues: Uteroglobin (96 aa).

An N-terminal signal peptide occupies residues 1 to 21 (MKIAITITVVMLSICCSSASS).

It belongs to the secretoglobin family. In terms of assembly, antiparallel homodimer; disulfide-linked. Interaction with LMBR1L is controversial. In terms of tissue distribution, club cells (nonciliated cells of the surface epithelium of the pulmonary airways).

The protein localises to the secreted. In terms of biological role, binds phosphatidylcholine, phosphatidylinositol, polychlorinated biphenyls (PCB) and weakly progesterone, potent inhibitor of phospholipase A2. The polypeptide is Uteroglobin (Scgb1a1) (Mus musculus (Mouse)).